A 180-amino-acid polypeptide reads, in one-letter code: ATP-dependent protease subunit HslV (180 aa).

The active site involves T8. The Na(+) site is built by A165, C168, and T171.

The protein belongs to the peptidase T1B family. HslV subfamily. As to quaternary structure, a double ring-shaped homohexamer of HslV is capped on each side by a ring-shaped HslU homohexamer. The assembly of the HslU/HslV complex is dependent on binding of ATP.

It is found in the cytoplasm. It carries out the reaction ATP-dependent cleavage of peptide bonds with broad specificity.. Allosterically activated by HslU binding. Protease subunit of a proteasome-like degradation complex believed to be a general protein degrading machinery. In Staphylococcus epidermidis (strain ATCC 12228 / FDA PCI 1200), this protein is ATP-dependent protease subunit HslV.